Reading from the N-terminus, the 81-residue chain is MKQSLCLAVLFLILSTSSSAIRRGKEDQEINPLVSATSVEEDSVNKLMGMEYCGEGDEECLRRRMMTESHLDYIYTQHHKH.

The first 20 residues, Met1–Ala20, serve as a signal peptide directing secretion. Positions Ile21 to Asp72 are excised as a propeptide. 2 positions are modified to sulfotyrosine: Tyr73 and Tyr75. A propeptide spanning residues His78–His81 is cleaved from the precursor.

The protein belongs to the phytosulfokine family. Post-translationally, sulfation is important for activity and for the binding to a putative membrane receptor. In terms of processing, PSK-beta is an enzymatic derivative of PSK-alpha. As to expression, expressed in roots, leaves, stems, flowers and siliques. Most abundant in vascular bundles and in root tips.

It localises to the secreted. Promotes plant cell differentiation, organogenesis and somatic embryogenesis as well as cell proliferation. This chain is Putative phytosulfokines 6 (PSK6), found in Arabidopsis thaliana (Mouse-ear cress).